We begin with the raw amino-acid sequence, 150 residues long: Small ribosomal subunit protein eS6 (150 aa).

The protein belongs to the eukaryotic ribosomal protein eS6 family.

In Caldivirga maquilingensis (strain ATCC 700844 / DSM 13496 / JCM 10307 / IC-167), this protein is Small ribosomal subunit protein eS6.